Consider the following 383-residue polypeptide: Guanine nucleotide-binding protein G(s) subunit alpha (383 aa).

Residues methionine 1–threonine 31 are disordered. The N-palmitoyl glycine moiety is linked to residue glycine 2. A lipid anchor (S-palmitoyl cysteine) is attached at cysteine 3. The span at glycine 8–serine 17 shows a compositional bias: polar residues. Positions glutamate 18–threonine 31 are enriched in basic and acidic residues. A G-alpha domain is found at alanine 43–leucine 383. A G1 motif region spans residues arginine 46–threonine 59. GTP contacts are provided by residues glycine 51–serine 58, leucine 187–threonine 193, aspartate 212–glutamine 216, asparagine 281–aspartate 284, and alanine 355. Mg(2+)-binding residues include serine 58 and threonine 193. A G2 motif region spans residues aspartate 185 to threonine 193. The G3 motif stretch occupies residues phenylalanine 208–arginine 217. Residues isoleucine 277–aspartate 284 form a G4 motif region. The G5 motif stretch occupies residues threonine 353–threonine 358.

This sequence belongs to the G-alpha family. G(s) subfamily. As to quaternary structure, g proteins are composed of 3 units; alpha, beta and gamma. The alpha chain contains the guanine nucleotide binding site.

Functionally, guanine nucleotide-binding proteins (G proteins) are involved as modulators or transducers in various transmembrane signaling systems. The G(s) protein is involved in hormonal regulation of adenylate cyclase: it activates the cyclase. Participates in olfactory signal transduction. The sequence is that of Guanine nucleotide-binding protein G(s) subunit alpha from Anopheles gambiae (African malaria mosquito).